The primary structure comprises 368 residues: Somatostatin receptor type 5 (368 aa).

Residues 1–45 are Extracellular-facing; it reads MEPLFPASPLTTWNTSSVVPSGSGDENGTLAGLGPSPGARAVVVP. 2 N-linked (GlcNAc...) asparagine glycosylation sites follow: Asn14 and Asn27. A helical membrane pass occupies residues 46–66; the sequence is VLYLLVCAVGLGGNTLVIYVV. Over 67-77 the chain is Cytoplasmic; it reads LRHAKMKTVTN. A helical transmembrane segment spans residues 78–98; sequence IYILNLAVADVLLMLGLPFVA. The Extracellular portion of the chain corresponds to 99–115; sequence TQNAISYWPFGPVLCRL. A disulfide bond links Cys113 and Cys188. The chain crosses the membrane as a helical span at residues 116–136; the sequence is VMTLDGINQFTSIFCLTVMSV. Over 137 to 158 the chain is Cytoplasmic; that stretch reads DRYLAVVHPIRSARWRRPRVAK. Residues 159–179 traverse the membrane as a helical segment; the sequence is LASAAVWAFSLVMSLPLVVFA. Residues 180 to 207 are Extracellular-facing; that stretch reads DIQEGWNTCNLSWPEPVGLWGAVFIIYT. An N-linked (GlcNAc...) asparagine glycan is attached at Asn189. Residues 208 to 228 traverse the membrane as a helical segment; it reads SVLGFFGPLLVICLCYLLIVV. The Cytoplasmic segment spans residues 229–251; the sequence is KLKASGVRVGSTRRRSERKVTRM. A helical transmembrane segment spans residues 252-272; the sequence is VVVVVLVFAGCWLPFFIVNIV. At 273–286 the chain is on the extracellular side; it reads NLAFALPEEPASAG. A helical membrane pass occupies residues 287 to 309; sequence AYFFVVVLSYANSCANPLLYGFL. Over 310-368 the chain is Cytoplasmic; it reads SDNFRQSFRKVLCLRKGYGAGAEDADATEPQPGPSSRLQEAMMPVRSCKANGLMQTSKL. Cys322 carries the S-palmitoyl cysteine; by ZDHHC5 lipid modification.

This sequence belongs to the G-protein coupled receptor 1 family. As to quaternary structure, heterodimer with SSTR2. Heterodimerization with SSTR2 increases cell growth inhibition activity of SSTR2. Post-translationally, palmitoylated by ZDHHC5, but not ZDHHC3, nor ZDHHC8. Palmitoylation creates an additional intracellular loop which is thought to be important for efficient coupling to G-proteins and may target the protein to lipid rafts.

It is found in the cell membrane. Receptor for somatostatin 28 and to a lesser extent for somatostatin-14. The activity of this receptor is mediated by G proteins which inhibit adenylyl cyclase. Increases cell growth inhibition activity of SSTR2 following heterodimerization. The sequence is that of Somatostatin receptor type 5 (SSTR5) from Bos taurus (Bovine).